The sequence spans 233 residues: MPKRGKKYLEALKLVDRFKAYPVAEAIELVKKTNVAKFDATVEVAFRLGVDPKKADQQIRGAVVLPHGTGKVARVLVFAKGEKAKEAEAAGADYVGDTEYINKIQQGWFDFDVVVATPDMMGEVGKLGRILGPKGLMPNPKTGTVTFDVTKAVQEIKAGKVEYRVDKAGNIHVPIGKVSFDNEKLAENFATIYEAILKAKPAAAKGTYVKNVTITSTMGPGIKVDPTTVAVAQ.

Belongs to the universal ribosomal protein uL1 family. As to quaternary structure, part of the 50S ribosomal subunit.

Binds directly to 23S rRNA. The L1 stalk is quite mobile in the ribosome, and is involved in E site tRNA release. Its function is as follows. Protein L1 is also a translational repressor protein, it controls the translation of the L11 operon by binding to its mRNA. The polypeptide is Large ribosomal subunit protein uL1 (Geobacillus thermodenitrificans (strain NG80-2)).